The sequence spans 2332 residues: Genome polyprotein (2332 aa).

One can recognise a Peptidase C28 domain in the interval 1–201 (MNTTDCFIAL…WKAKVQRKLK (201 aa)). Residues 1 to 1480 (MNTTDCFIAL…SFVKRAFKRL (1480 aa)) are Cytoplasmic-facing. Active-site for leader protease activity residues include Cys51, His148, and Asp163. 2 disordered regions span residues 197-218 (QRKL…QSGN) and 238-265 (QLGD…NTQN). Gly202 carries N-myristoyl glycine; by host lipidation. Composition is skewed to polar residues over residues 204–218 (GQSS…QSGN) and 238–251 (QLGD…SNEG). A compositionally biased stretch (low complexity) spans 252–265 (STDTTSTHTTNTQN). Cys406 and Cys858 are joined by a disulfide. The antigenic epitope stretch occupies residues 788–796 (ALLRASTYY). A Cell attachment site motif is present at residues 869-871 (RGD). One can recognise an SF3 helicase domain in the interval 1189 to 1353 (NVHIANLCKV…DGYKINSKLD (165 aa)). An ATP-binding site is contributed by 1217 to 1224 (GKSGQGKS). The stretch at 1481 to 1501 (KENFEIVALCLTLLANIVIMI) is an intramembrane region. The Cytoplasmic portion of the chain corresponds to 1502–2332 (RETRKRQKMV…RWVNAVCGDA (831 aa)). Basic and acidic residues predominate over residues 1529–1538 (KTLDEAEKSP). Residues 1529-1584 (KTLDEAEKSPLETSGASTVGFRERTLPGQKACDDVNSEPAQPVEEQPQAEGPYAGP) are disordered. Tyr1581, Tyr1604, and Tyr1628 each carry O-(5'-phospho-RNA)-tyrosine. One can recognise a Peptidase C3 domain in the interval 1652 to 1848 (APPTDLQKMV…YCSCVSRSML (197 aa)). His1695 (for protease 3C activity; Proton donor/acceptor) is an active-site residue. Catalysis depends on for protease 3C activity residues Asp1733 and Cys1812. 2 consecutive short sequence motifs (nuclear localization signal) follow at residues 1878 to 1886 (MRKTKLAPT) and 1879 to 1886 (RKTKLAPT). Residues 2096-2214 (RNVWDVDYSA…ASDYDLDFEA (119 aa)) form the RdRp catalytic domain. The active-site For RdRp activity is Asp2200.

Belongs to the picornaviruses polyprotein family. In terms of assembly, interacts with host ISG15. Interacts (via R-G-D motif) with host ITGAV/ITGB6. Interacts with host MAVS; this interaction inhibits binding of host TRAF3 to MAVS, thereby suppressing interferon-mediated responses. As to quaternary structure, forms homooligomers. In terms of assembly, homohexamer. Interacts with host VIM. Interacts with host BECN1. Interacts with host DCTN3. As to quaternary structure, interacts with RNA-dependent RNA polymerase; this interaction allows 3B-1 to binds 2 polymerases and act as a primer. It also allows the recruitment of the RNA-dependent RNA polymerase to host membranes. In terms of assembly, interacts with RNA-dependent RNA polymerase; this interaction allows 3B-2 to act as a primer. Interacts with RNA-dependent RNA polymerase; this interaction allows 3B-3 to act as a primer. As to quaternary structure, interacts with 3B-1; this interaction allows 3B-1 to binds 2 polymerases and act as a primer. It also allows the recruitment of the RNA-dependent RNA polymerase to host membranes. Interacts with 3B-2; this interaction allows 3B-2 to act as a primer. Interacts with 3B-3; this interaction allows 3B-3 to act as a primer. Post-translationally, removes six residues from its own C-terminus, generating sLb(pro). In terms of processing, specific enzymatic cleavages in vivo by the viral proteases yield a variety of precursors and mature proteins. The polyprotein seems to be cotranslationally cleaved at the 2A/2B junction by a ribosomal skip from one codon to the next without formation of a peptide bond. This process would release the L-P1-2A peptide from the translational complex. During virion maturation, immature virions are rendered infectious following cleavage of VP0 into VP4 and VP2. This maturation seems to be an autocatalytic event triggered by the presence of RNA in the capsid and is followed by a conformational change of the particle. Post-translationally, myristoylation is required during RNA encapsidation and formation of the mature virus particle. In terms of processing, uridylylated by the polymerase and covalently linked to the 5'-end of genomic RNA. These uridylylated forms act as a nucleotide-peptide primer for the polymerase. The disulfide bond between VP1 and VP2 occurs after release of virus from the host cell.

It localises to the host nucleus. It is found in the host cytoplasm. The protein localises to the virion. Its subcellular location is the host endoplasmic reticulum membrane. The protein resides in the host cytoplasmic vesicle membrane. It catalyses the reaction Autocatalytically cleaves itself from the polyprotein of the foot-and-mouth disease virus by hydrolysis of a Lys-|-Gly bond, but then cleaves host cell initiation factor eIF-4G at bonds -Gly-|-Arg- and -Lys-|-Arg-.. The catalysed reaction is a ribonucleoside 5'-triphosphate + H2O = a ribonucleoside 5'-diphosphate + phosphate + H(+). The enzyme catalyses RNA(n) + a ribonucleoside 5'-triphosphate = RNA(n+1) + diphosphate. It carries out the reaction Selective cleavage of Gln-|-Gly bond in the poliovirus polyprotein. In other picornavirus reactions Glu may be substituted for Gln, and Ser or Thr for Gly.. Functionally, autocatalytically cleaves itself from the polyprotein at the L/VP0 junction. Also cleaves the host translation initiation factors EIF4G1 and EIF4G3, in order to shut off the capped cellular mRNA transcription. Plays a role in counteracting host innate antiviral response using diverse mechanisms. Possesses a deubiquitinase activity acting on both 'Lys-48' and 'Lys-63'-linked polyubiquitin chains. In turn, inhibits the ubiquitination and subsequent activation of key signaling molecules of type I IFN response such as host RIGI, TBK1, TRAF3 and TRAF6. Inhibits host NF-kappa-B activity by inducing a decrease in RELA mRNA levels. Cleaves a peptide bond in the C-terminus of host ISG15, resulting in the damaging of this modifier that can no longer be attached to target proteins. Also cleaves host G3BP1 and G3BP2 in order to inhibit cytoplasmic stress granules assembly. Lies on the inner surface of the capsid shell. After binding to the host receptor, the capsid undergoes conformational changes. Capsid protein VP4 is released, capsid protein VP1 N-terminus is externalized, and together, they shape a pore in the host membrane through which the viral genome is translocated into the host cell cytoplasm. After genome has been released, the channel shrinks. Its function is as follows. Forms an icosahedral capsid of pseudo T=3 symmetry with capsid proteins VP1 and VP3. The capsid is composed of 60 copies of each capsid protein organized in the form of twelve pentamers and encloses the viral positive strand RNA genome. Upon acidifcation in the endosome, dissociates into pentamers. In terms of biological role, forms an icosahedral capsid of pseudo T=3 symmetry with capsid proteins VP2 and VP3. The capsid is composed of 60 copies of each capsid protein organized in the form of twelve pentamers and encloses the viral positive strand RNA genome. Mediates cell entry by attachment to an integrin receptor, usually host ITGAV/ITGB6, via a conserved arginine-glycine-aspartic acid (R-G-D) motif. In addition, targets host MAVS to suppress type I IFN pathway. Upon acidifcation in the endosome, dissociates into pentamers. Functionally, forms an icosahedral capsid of pseudo T=3 symmetry with capsid proteins VP0 and VP3. The capsid is composed of 60 copies of each capsid protein organized in the form of twelve pentamers and encloses the viral positive strand RNA genome. Upon acidifcation in the endosome, dissociates into pentamers. Mediates self-processing of the polyprotein by a translational effect termed 'ribosome skipping'. Mechanistically, 2A-mediated cleavage occurs between the C-terminal glycine and the proline of the downstream protein 2B. In the case of foot-and-mouth disease virus, the 2A oligopeptide is post-translationally 'trimmed' from the C-terminus of the upstream protein 1D by 3C proteinase. Its function is as follows. Plays an essential role in the virus replication cycle by acting as a viroporin. Creates a pore in the host endoplasmic reticulum and as a consequence releases Ca2+ in the cytoplasm of infected cell. In turn, high levels of cytoplasmic calcium may trigger membrane trafficking and transport of viral ER-associated proteins to viroplasms, sites of viral genome replication. In terms of biological role, associates with and induces structural rearrangements of intracellular membranes. Triggers host autophagy by interacting with host BECN1 and thereby promotes viral replication. Participates in viral replication and interacts with host DHX9. Displays RNA-binding, nucleotide binding and NTPase activities. May play a role in virion morphogenesis and viral RNA encapsidation by interacting with the capsid protein VP3. Functionally, plays important roles in virus replication, virulence and host range. Cooperates with host DDX56 to inhibit IRF3 nuclear translocation and subsequent type I interferon production. Covalently linked to the 5'-end of both the positive-strand and negative-strand genomic RNAs. Acts as a genome-linked replication primer. Its function is as follows. Cysteine protease that generates mature viral proteins from the precursor polyprotein. In addition to its proteolytic activity, binds to viral RNA and thus influences viral genome replication. RNA and substrate bind cooperatively to the protease. In terms of biological role, RNA-directed RNA polymerase 3D-POL replicates genomic and antigenomic RNA by recognizing replications specific signals. Covalently attaches UMP to a tyrosine of VPg, which is used to prime RNA synthesis. The positive stranded RNA genome is first replicated at virus induced membranous vesicles, creating a dsRNA genomic replication form. This dsRNA is then used as template to synthesize positive stranded RNA genomes. ss(+)RNA genomes are either translated, replicated or encapsidated. The chain is Genome polyprotein from Bos taurus (Bovine).